A 456-amino-acid chain; its full sequence is Cysteine--tRNA ligase (456 aa).

Position 28 (Cys28) interacts with Zn(2+). A 'HIGH' region motif is present at residues Ile30–His40. Residues Cys209, His234, and Glu238 each contribute to the Zn(2+) site. The short motif at Lys266–Ser270 is the 'KMSKS' region element. An ATP-binding site is contributed by Lys269.

The protein belongs to the class-I aminoacyl-tRNA synthetase family. As to quaternary structure, monomer. Requires Zn(2+) as cofactor.

It localises to the cytoplasm. The catalysed reaction is tRNA(Cys) + L-cysteine + ATP = L-cysteinyl-tRNA(Cys) + AMP + diphosphate. The sequence is that of Cysteine--tRNA ligase from Legionella pneumophila (strain Paris).